Consider the following 164-residue polypeptide: FMN reductase (NADH) RutF (164 aa).

Belongs to the non-flavoprotein flavin reductase family. RutF subfamily.

The enzyme catalyses FMNH2 + NAD(+) = FMN + NADH + 2 H(+). Catalyzes the reduction of FMN to FMNH2 which is used to reduce pyrimidine by RutA via the Rut pathway. The polypeptide is FMN reductase (NADH) RutF (Escherichia coli O81 (strain ED1a)).